A 380-amino-acid polypeptide reads, in one-letter code: Opsin-2 (380 aa).

Residues 1–51 (MVNTTDFYPVPAAMAYESSVGLPLLGWNVPTEHLDLVHPHWRSFQVPNKYW) are Extracellular-facing. Asparagine 3 carries N-linked (GlcNAc...) asparagine glycosylation. Residues 52–76 (HFGLAFVYFMLMCMSSLGNGIVLWI) traverse the membrane as a helical segment. Over 77 to 88 (YATTKSIRTPSN) the chain is Cytoplasmic. The helical transmembrane segment at 89-115 (MFIVNLALFDVLMLLEMPMLVVSSLFY) threads the bilayer. The Extracellular segment spans residues 116 to 128 (QRPVGWELGCDIY). A disulfide bond links cysteine 125 and cysteine 202. A helical membrane pass occupies residues 129 to 148 (AALGSVAGIGSAINNAAIAF). The Cytoplasmic segment spans residues 149–166 (DRYRTISCPIDGRLTQGQ). The chain crosses the membrane as a helical span at residues 167 to 191 (VLALIAGTWVWTLPFTLMPLLRIWS). At 192–215 (RFTAEGFLTTCSFDYLTDDEDTKV) the chain is on the extracellular side. A helical membrane pass occupies residues 216-243 (FVGCIFAWSYAFPLCLICCFYYRLIGAV). At 244-279 (REHEKMLRDQAKKMNVKSLQSNADTEAQSAEIRIAK) the chain is on the cytoplasmic side. The helical transmembrane segment at 280-303 (VALTIFFLFLCSWTPYAVVAMIGA) threads the bilayer. Topologically, residues 304-311 (FGNRAALT) are extracellular. The chain crosses the membrane as a helical span at residues 312–336 (PLSTMIPAVTAKIVSCIDPWVYAIN). Lysine 323 carries the N6-(retinylidene)lysine modification. Residues 337-380 (HPRFRAEVQKRMKWLHLGEDARSSKSDTSSTATDRTVGNVSASA) lie on the Cytoplasmic side of the membrane. Residues 358–380 (RSSKSDTSSTATDRTVGNVSASA) form a disordered region. The segment covering 362–372 (SDTSSTATDRT) has biased composition (low complexity).

It belongs to the G-protein coupled receptor 1 family. Opsin subfamily. Post-translationally, phosphorylated on some or all of the serine and threonine residues present in the C-terminal region.

Its subcellular location is the membrane. Functionally, visual pigments are the light-absorbing molecules that mediate vision. They consist of an apoprotein, opsin, covalently linked to cis-retinal. The polypeptide is Opsin-2 (Lo2) (Schistocerca gregaria (Desert locust)).